The primary structure comprises 139 residues: Acidic phospholipase A2 H1E6 (139 aa).

The first 16 residues, 1-16 (MRTLWILAVLQVGVEG), serve as a signal peptide directing secretion. 7 disulfide bridges follow: Cys-42-Cys-132, Cys-44-Cys-60, Cys-59-Cys-111, Cys-65-Cys-139, Cys-66-Cys-104, Cys-73-Cys-97, and Cys-91-Cys-102. Residues Tyr-43, Gly-45, and Gly-47 each coordinate Ca(2+). His-63 is a catalytic residue. Residue Asp-64 participates in Ca(2+) binding. The active site involves Asp-105.

As to quaternary structure, homodimer. Ca(2+) serves as cofactor. In terms of tissue distribution, expressed by the venom gland.

The protein localises to the secreted. The enzyme catalyses a 1,2-diacyl-sn-glycero-3-phosphocholine + H2O = a 1-acyl-sn-glycero-3-phosphocholine + a fatty acid + H(+). In terms of biological role, snake venom phospholipase A2 (PLA2) that inhibits ADP-induced platelet aggregation. PLA2 catalyzes the calcium-dependent hydrolysis of the 2-acyl groups in 3-sn-phosphoglycerides. The polypeptide is Acidic phospholipase A2 H1E6 (Calloselasma rhodostoma (Malayan pit viper)).